Here is a 114-residue protein sequence, read N- to C-terminus: UPF0212 protein UNCMA_00570 (114 aa).

Belongs to the UPF0212 family.

In Methanocella arvoryzae (strain DSM 22066 / NBRC 105507 / MRE50), this protein is UPF0212 protein UNCMA_00570.